Here is an 833-residue protein sequence, read N- to C-terminus: A disintegrin and metalloproteinase with thrombospondin motifs 4 (833 aa).

The first 49 residues, 1–49 (MSQMGLHPRRGLTGHWLQRFQPCLPLHTVQWRRLLLLAFLLSLAWPASP), serve as a signal peptide directing secretion. Positions 50–208 (LPREEEIVFP…PSPISRRTKR (159 aa)) are excised as a propeptide. Asn63 carries N-linked (GlcNAc...) asparagine glycosylation. Residues 180-204 (KSPASSQGPMCTVKAPSGSPSPISR) are disordered. A Cysteine switch motif is present at residues 188-195 (PMCTVKAP). Cys190 provides a ligand contact to Zn(2+). In terms of domain architecture, Peptidase M12B spans 214-424 (RFVETLVVAD…GYGHCLLDKP (211 aa)). Cystine bridges form between Cys289–Cys341, Cys318–Cys323, Cys335–Cys419, Cys373–Cys403, Cys445–Cys468, Cys456–Cys478, Cys463–Cys497, Cys491–Cys502, Cys528–Cys565, Cys532–Cys570, and Cys543–Cys555. An N-linked (GlcNAc...) asparagine glycan is attached at Asn299. Zn(2+) is bound at residue His357. Glu358 is an active-site residue. Zn(2+) is bound by residues His361 and His367. In terms of domain architecture, Disintegrin spans 433–515 (TFPGKDYDAD…DQLKDFNVPQ (83 aa)). The region spanning 516–571 (AGGWGPWGPWGDCSRTCGGGVQFSSRDCTRPVPRNGGKYCEGRRTRFRSCNTENCP) is the TSP type-1 domain. Residues 682–833 (SKQSGSFKKF…LRKRPWAGRK (152 aa)) form a spacer region.

Interacts with SRPX2. Zn(2+) is required as a cofactor. The precursor is cleaved by a furin endopeptidase. In terms of processing, glycosylated. Can be O-fucosylated by POFUT2 on a serine or a threonine residue found within the consensus sequence C1-X(2)-(S/T)-C2-G of the TSP type-1 repeat domains where C1 and C2 are the first and second cysteine residue of the repeat, respectively. Fucosylated repeats can then be further glycosylated by the addition of a beta-1,3-glucose residue by the glucosyltransferase, B3GALTL. Fucosylation mediates the efficient secretion of ADAMTS family members. Can also be C-glycosylated with one or two mannose molecules on tryptophan residues within the consensus sequence W-X-X-W of the TPRs, and N-glycosylated. These other glycosylations can also facilitate secretion.

It localises to the secreted. Its subcellular location is the extracellular space. It is found in the extracellular matrix. The catalysed reaction is Glutamyl endopeptidase. Bonds cleaved include 370-Thr-Glu-Gly-Glu-|-Ala-Arg-Gly-Ser-377 in the interglobular domain of mammalian aggrecan.. In terms of biological role, cleaves aggrecan, a cartilage proteoglycan, at the '392-Glu-|-Ala-393' site and may be involved in its turnover. Also cleaves COMP. May play an important role in the destruction of aggrecan in arthritic diseases. This Mus musculus (Mouse) protein is A disintegrin and metalloproteinase with thrombospondin motifs 4 (Adamts4).